The primary structure comprises 623 residues: tRNA uridine 5-carboxymethylaminomethyl modification enzyme MnmG (623 aa).

FAD contacts are provided by residues glycine 11–glycine 16, valine 123, and serine 178. Glycine 270–phenylalanine 284 serves as a coordination point for NAD(+). FAD is bound at residue glutamine 367.

Belongs to the MnmG family. As to quaternary structure, homodimer. Heterotetramer of two MnmE and two MnmG subunits. FAD is required as a cofactor.

The protein resides in the cytoplasm. Its function is as follows. NAD-binding protein involved in the addition of a carboxymethylaminomethyl (cmnm) group at the wobble position (U34) of certain tRNAs, forming tRNA-cmnm(5)s(2)U34. This Phocaeicola vulgatus (strain ATCC 8482 / DSM 1447 / JCM 5826 / CCUG 4940 / NBRC 14291 / NCTC 11154) (Bacteroides vulgatus) protein is tRNA uridine 5-carboxymethylaminomethyl modification enzyme MnmG.